The sequence spans 463 residues: Argininosuccinate lyase (463 aa).

Belongs to the lyase 1 family. Argininosuccinate lyase subfamily.

It localises to the cytoplasm. The enzyme catalyses 2-(N(omega)-L-arginino)succinate = fumarate + L-arginine. The protein operates within amino-acid biosynthesis; L-arginine biosynthesis; L-arginine from L-ornithine and carbamoyl phosphate: step 3/3. The chain is Argininosuccinate lyase from Bacillus cereus (strain AH187).